The chain runs to 120 residues: Chaperonin GroEL (120 aa).

Position 23-27 (23-27) interacts with ATP; the sequence is DGTTT.

The protein belongs to the chaperonin (HSP60) family. In terms of assembly, forms a cylinder of 14 subunits composed of two heptameric rings stacked back-to-back. Interacts with the co-chaperonin GroES.

It localises to the cytoplasm. The enzyme catalyses ATP + H2O + a folded polypeptide = ADP + phosphate + an unfolded polypeptide.. Together with its co-chaperonin GroES, plays an essential role in assisting protein folding. The GroEL-GroES system forms a nano-cage that allows encapsulation of the non-native substrate proteins and provides a physical environment optimized to promote and accelerate protein folding. This is Chaperonin GroEL from Mycolicibacterium pulveris (Mycobacterium pulveris).